A 224-amino-acid chain; its full sequence is Protein GrpE (224 aa).

Residues 1-72 (MEKERDVAQE…KAKEEQNEEL (72 aa)) form a disordered region. Over residues 10 to 19 (EQATYEQESP) the composition is skewed to polar residues. A compositionally biased stretch (basic and acidic residues) spans 20–67 (NAERQEELKENEHQEKNAPEEQEKVREENGRQDAQKDEIGDPEKAKEE).

This sequence belongs to the GrpE family. In terms of assembly, homodimer.

The protein localises to the cytoplasm. Its function is as follows. Participates actively in the response to hyperosmotic and heat shock by preventing the aggregation of stress-denatured proteins, in association with DnaK and GrpE. It is the nucleotide exchange factor for DnaK and may function as a thermosensor. Unfolded proteins bind initially to DnaJ; upon interaction with the DnaJ-bound protein, DnaK hydrolyzes its bound ATP, resulting in the formation of a stable complex. GrpE releases ADP from DnaK; ATP binding to DnaK triggers the release of the substrate protein, thus completing the reaction cycle. Several rounds of ATP-dependent interactions between DnaJ, DnaK and GrpE are required for fully efficient folding. This chain is Protein GrpE, found in Parageobacillus thermoglucosidasius (Geobacillus thermoglucosidasius).